A 541-amino-acid polypeptide reads, in one-letter code: Protein yellow (541 aa).

A signal peptide spans Met-1–Ala-21. Residues Asn-144 and Asn-215 are each glycosylated (N-linked (GlcNAc...) asparagine). Residues Gln-443–Ala-463 form a disordered region.

The protein belongs to the major royal jelly protein family.

The protein localises to the secreted. In terms of biological role, controls the pigmentation pattern of the adult cuticle and larval mouth parts. In Drosophila melanogaster (Fruit fly), this protein is Protein yellow (y).